The sequence spans 550 residues: Dihydroxy-acid dehydratase (550 aa).

Aspartate 78 lines the Mg(2+) pocket. Cysteine 119 is a binding site for [2Fe-2S] cluster. Residues aspartate 120 and lysine 121 each coordinate Mg(2+). Position 121 is an N6-carboxylysine (lysine 121). [2Fe-2S] cluster is bound at residue cysteine 191. Glutamate 440 lines the Mg(2+) pocket. The active-site Proton acceptor is the serine 466.

It belongs to the IlvD/Edd family. As to quaternary structure, homodimer. It depends on [2Fe-2S] cluster as a cofactor. Mg(2+) serves as cofactor.

It carries out the reaction (2R)-2,3-dihydroxy-3-methylbutanoate = 3-methyl-2-oxobutanoate + H2O. The catalysed reaction is (2R,3R)-2,3-dihydroxy-3-methylpentanoate = (S)-3-methyl-2-oxopentanoate + H2O. It participates in amino-acid biosynthesis; L-isoleucine biosynthesis; L-isoleucine from 2-oxobutanoate: step 3/4. Its pathway is amino-acid biosynthesis; L-valine biosynthesis; L-valine from pyruvate: step 3/4. Its function is as follows. Functions in the biosynthesis of branched-chain amino acids. Catalyzes the dehydration of (2R,3R)-2,3-dihydroxy-3-methylpentanoate (2,3-dihydroxy-3-methylvalerate) into 2-oxo-3-methylpentanoate (2-oxo-3-methylvalerate) and of (2R)-2,3-dihydroxy-3-methylbutanoate (2,3-dihydroxyisovalerate) into 2-oxo-3-methylbutanoate (2-oxoisovalerate), the penultimate precursor to L-isoleucine and L-valine, respectively. The chain is Dihydroxy-acid dehydratase from Methanococcus aeolicus (strain ATCC BAA-1280 / DSM 17508 / OCM 812 / Nankai-3).